A 246-amino-acid chain; its full sequence is Anionic trypsin-2 (246 aa).

The N-terminal stretch at Met1 to Ala15 is a signal peptide. Residues Phe16 to Lys23 constitute a propeptide, activation peptide. Residues Ile24–Ala244 enclose the Peptidase S1 domain. 6 cysteine pairs are disulfide-bonded: Cys30–Cys160, Cys48–Cys64, Cys132–Cys233, Cys139–Cys206, Cys171–Cys185, and Cys196–Cys220. His63 (charge relay system) is an active-site residue. Residues Glu75, Asn77, Val80, and Glu85 each contribute to the Ca(2+) site. Asp107 functions as the Charge relay system in the catalytic mechanism. Ser200 acts as the Charge relay system in catalysis.

Belongs to the peptidase S1 family. Requires Ca(2+) as cofactor. In terms of tissue distribution, expressed in the pancreas, lung and kidney.

The protein localises to the secreted. The protein resides in the extracellular space. It catalyses the reaction Preferential cleavage: Arg-|-Xaa, Lys-|-Xaa.. This chain is Anionic trypsin-2 (Prss2), found in Mus musculus (Mouse).